The chain runs to 387 residues: 3-ketoacyl-CoA thiolase (387 aa).

The active-site Acyl-thioester intermediate is Cys-91. Residues His-343 and Cys-373 each act as proton acceptor in the active site.

This sequence belongs to the thiolase-like superfamily. Thiolase family. As to quaternary structure, heterotetramer of two alpha chains (FadB) and two beta chains (FadA).

The protein resides in the cytoplasm. The catalysed reaction is an acyl-CoA + acetyl-CoA = a 3-oxoacyl-CoA + CoA. Its pathway is lipid metabolism; fatty acid beta-oxidation. Catalyzes the final step of fatty acid oxidation in which acetyl-CoA is released and the CoA ester of a fatty acid two carbons shorter is formed. The sequence is that of 3-ketoacyl-CoA thiolase from Photobacterium profundum (strain SS9).